Consider the following 622-residue polypeptide: Pyranose 2-oxidase (622 aa).

Positions Met-1–His-28 are cleaved as a signal peptide. The propeptide occupies Ser-29 to Gly-37. His-167 bears the Tele-8alpha-FAD histidine mark. Residues Gln-449 and His-451 each coordinate substrate. The active-site Proton acceptor is His-546. Residue Asn-591 is part of the active site.

It belongs to the GMC oxidoreductase family. In terms of assembly, homotetramer. The cofactor is FAD. Not glycosylated.

The protein resides in the periplasm. It catalyses the reaction D-glucose + O2 = 2-dehydro-D-glucose + H2O2. Functionally, catalyzes the oxidation of various aldopyranoses and disaccharides on carbon-2 to the corresponding 2-keto sugars concomitant with the reduction of O(2) to H(2)O(2). Plays an important role in lignin degradation of wood rot fungi by supplying the essential cosubstrate H(2)O(2) for the ligninolytic peroxidases, lignin peroxidase and manganese-dependent peroxidase. The preferred substrate is D-glucose which is converted to 2-dehydro-D-glucose, an intermediate of a secondary metabolic pathway leading to the antibiotic cortalcerone. Also acts on D-xylose, together with D-glucose the major sugars derived from wood, on L-sorbose, D-galactose and 1,5-anhydroglucitol, a diagnostic marker of diabetes mellitus. The protein is Pyranose 2-oxidase (p2ox) of Phlebiopsis gigantea (White-rot fungus).